Here is a 688-residue protein sequence, read N- to C-terminus: MLESERPERDMEEEGEESNEEEEEEGMSFSDPEGFEDDISDEELLGDILKDRPQEADGIDSVIVVDNVPQVGPDRLEKLKNVIVKIFSKFGKLTNEFYPQAEGSTKGYIFLEYALPAQAQDAVKNADGYKLDKQHTFRVNLFTDFDKYMVIGDEWDVPEKQPFKDFGNLRSWLEDPDCRDQFSVIYESGDRTSIFWTDVKEPVPVEERARWTETYVRWSPKGTYLATFHQRGIALWGGEKFKQIQRFSHQGVQLIDFSPCERYLVTFSPLMDTKEEPQAIIIWDILTGHNKRGFHCESSAHWPIFKWSHDGKFFARMTLDTLSIYETPSMGLLDKKSLKITGIKDFSWSPGGNIIAFWVPEDKDIPARVTLMQMPTRQEIRVRNLFNVVDCKLHWQKNGDYLCVKVDRTPKGTQGMVTNFEIFRMREKQVPVDVVEMKDGIIAFAWEPNGSKFAVLHGEVPRISVSFYHVKNNGKIELIKMYDKQQANTIFWSPQGQFLVLAGLRSMNGALAFVDTSDCTIMNIAEHYTASDVEWDPTGRYVITSVSWWSHKVDNAYWMWTFQGRLLQKNNKDRFCQLLWRPRPPSLLSQDQIKQIKKDLKKYSKIFEQKDRLSQTKASKELIERRRAMMEEYKTYREMATKLYMEQKTARLEIRGGVDTDLLDSNVEDWEEETIEFFVTEEIIPVEE.

Residues 1–43 (MLESERPERDMEEEGEESNEEEEEEGMSFSDPEGFEDDISDEE) are disordered. Acidic residues-rich tracts occupy residues 10 to 26 (DMEEEGEESNEEEEEEG) and 33 to 43 (EGFEDDISDEE). An RRM domain is found at 61 to 144 (SVIVVDNVPQ…HTFRVNLFTD (84 aa)). WD repeat units lie at residues 164 to 206 (KDFG…VPVE), 208 to 246 (RARWTETYVRWSPKGTYLATFHQRGIALWGGEKFKQIQR), 248 to 293 (SHQG…NKRG), 297 to 335 (ESSAHWPIFKWSHDGKFFARMTLDTLSIYETPSMGLLDK), 338 to 373 (LKITGIKDFSWSPGGNIIAFWVPEDKDIPARVTLMQ), 436 to 492 (EMKD…TIFW), 525 to 570 (AEHY…LQKN), and 635 to 680 (TYRE…FFVT). Residues 589 to 640 (SQDQIKQIKKDLKKYSKIFEQKDRLSQTKASKELIERRRAMMEEYKTYREMA) adopt a coiled-coil conformation.

Belongs to the eIF-3 subunit B family. In terms of assembly, component of the eukaryotic translation initiation factor 3 (eIF-3) complex, which is composed of 13 subunits: eif3a, eif3b, eif3c, eif3d, eif3e, eif3f, eif3g, eif3h, eif3i, eif3j, eif3k, eif3l and eif3m.

It localises to the cytoplasm. The protein resides in the stress granule. In terms of biological role, RNA-binding component of the eukaryotic translation initiation factor 3 (eIF-3) complex, which is involved in protein synthesis of a specialized repertoire of mRNAs and, together with other initiation factors, stimulates binding of mRNA and methionyl-tRNAi to the 40S ribosome. The eIF-3 complex specifically targets and initiates translation of a subset of mRNAs involved in cell proliferation. The chain is Eukaryotic translation initiation factor 3 subunit B (eif3b) from Xenopus laevis (African clawed frog).